The following is a 375-amino-acid chain: Odorant receptor 49b (375 aa).

The Cytoplasmic segment spans residues 1–28; it reads MFEDIQLIYMNIKILRFWALLYDKNLRR. The helical transmembrane segment at 29–49 threads the bilayer; sequence YVCIGLASFHIFTQIVYMMST. Residues 50-60 lie on the Extracellular side of the membrane; it reads NEGLTGIIRNS. The chain crosses the membrane as a helical span at residues 61-77; it reads YMLVLWINTVLRAYLLL. Topologically, residues 78–121 are cytoplasmic; sequence ADHDRYLALIQKLTEAYYDLLNLNDSYISEILDQVNKVGKLMAR. Residues 122–142 traverse the membrane as a helical segment; it reads GNLFFGMLTSMGFGLYPLSSS. Residues 143-176 are Extracellular-facing; the sequence is ERVLPFGSKIPGLNEYESPYYEMWYIFQMLITPM. A helical membrane pass occupies residues 177–197; the sequence is GCCMYIPYTSLIVGLIMFGIV. Residues 198 to 251 are Cytoplasmic-facing; it reads RCKALQHRLRQVALKHPYGDRDPRELREEIIACIRYQQSIIEYMDHINELTTMM. A helical transmembrane segment spans residues 252 to 272; that stretch reads FLFELMAFSALLCALLFMLII. The Extracellular segment spans residues 273 to 278; sequence VSGTSQ. The helical transmembrane segment at 279 to 299 threads the bilayer; sequence LIIVCMYINMILAQILALYWY. Over 300-342 the chain is Cytoplasmic; the sequence is ANELREQNLAVATAAYETEWFTFDVPLRKNILFMMMRAQRPAA. Residues 343 to 363 form a helical membrane-spanning segment; it reads ILLGNIRPITLELFQNLLNTT. Topologically, residues 364–375 are extracellular; it reads YTFFTVLKRVYG.

The protein belongs to the insect chemoreceptor superfamily. Heteromeric odorant receptor channel (TC 1.A.69) family. Or30a subfamily. As to quaternary structure, interacts with Orco. Complexes exist early in the endomembrane system in olfactory sensory neurons (OSNs), coupling these complexes to the conserved ciliary trafficking pathway. As to expression, expressed in olfactory sensory neurons in the antenna.

It localises to the cell membrane. In terms of biological role, odorant receptor which mediates acceptance or avoidance behavior, depending on its substrates. The odorant receptor repertoire encodes a large collection of odor stimuli that vary widely in identity, intensity, and duration. May form a complex with Orco to form odorant-sensing units, providing sensitive and prolonged odorant signaling and calcium permeability. This Drosophila melanogaster (Fruit fly) protein is Odorant receptor 49b (Or49b).